Reading from the N-terminus, the 194-residue chain is Protein DROOPING LEAF (194 aa).

The C4-type zinc finger occupies 15-42 (CTYCNTVLAVGVPCKRLMDTVTVKCGHC). Positions 83–103 (LVSPTSNEGSPRAPFVVKPPE) are disordered.

It belongs to the YABBY family.

The protein localises to the nucleus. In terms of biological role, regulates carpel specification in flower development. Severe or intermediate mutation in DL causes complete or partial homeotic conversion of carpels into stamens without affecting the identities of other floral organs. Interacts antagonistically with class B genes and controls floral meristem determinacy. Regulates midrib formation in leaves probably by inducing cell proliferation in the central region of the leaf. The sequence is that of Protein DROOPING LEAF (DL) from Oryza sativa subsp. japonica (Rice).